Reading from the N-terminus, the 282-residue chain is Heat stress transcription factor A-7b (282 aa).

Composition is skewed to low complexity over residues 1-11 (MDPSSSSRARS) and 120-134 (SSSSPPSLNYSQSQP). Disordered stretches follow at residues 1–24 (MDPSSSSRARSMPPPVPMEGLQEA) and 117–139 (RRTSSSSPPSLNYSQSQPEAHDP). Residues 26–120 (PSPFLTKTFE…LLKSIKRRTS (95 aa)) mediate DNA binding. Residues 137–196 (HDPGVELPQLREERHVLMMEISTLRQEEQRARGYVQAMEQRINGAEKKQRHMMSFLRRAV) are hydrophobic repeat HR-A/B. Residues 208-212 (QKRDR) carry the Nuclear localization signal motif. The short motif at 232–240 (LSELEALAL) is the Nuclear export signal element. Residues 259–268 (DGFWEELLMN) carry the AHA motif.

It belongs to the HSF family. Class A subfamily. In terms of assembly, homotrimer. In terms of processing, exhibits temperature-dependent phosphorylation.

The protein localises to the cytoplasm. It is found in the nucleus. Transcriptional activator that specifically binds DNA sequence 5'-AGAAnnTTCT-3' known as heat shock promoter elements (HSE). The polypeptide is Heat stress transcription factor A-7b (HSFA7B) (Arabidopsis thaliana (Mouse-ear cress)).